The following is a 92-amino-acid chain: PqqA binding protein (92 aa).

It belongs to the PqqD family. Monomer. Interacts with PqqE.

It functions in the pathway cofactor biosynthesis; pyrroloquinoline quinone biosynthesis. Its function is as follows. Functions as a PqqA binding protein and presents PqqA to PqqE, in the pyrroloquinoline quinone (PQQ) biosynthetic pathway. The sequence is that of PqqA binding protein from Xanthomonas axonopodis pv. citri (strain 306).